Consider the following 252-residue polypeptide: Cyclic di-GMP binding protein VCA0042 (252 aa).

Positions 1–11 (MNSRPAEKIDN) are enriched in basic and acidic residues. The interval 1-24 (MNSRPAEKIDNNDGQTETPRSKTV) is disordered. Polar residues predominate over residues 12-24 (NDGQTETPRSKTV). Residues 134-233 (QLRKEPRFEL…EEGRNNAKNL (100 aa)) form the PilZ domain.

The protein belongs to the YcgR family. In terms of assembly, dimer.

It localises to the bacterial flagellum basal body. Its function is as follows. May act as a flagellar brake, regulating swimming and swarming in a bis-(3'-5') cyclic diguanylic acid (c-di-GMP)-dependent manner. Increasing levels of c-di-GMP lead to decreased motility (Potential). Binds bis-(3'-5') cyclic diguanylic acid (c-di-GMP) with a dissociation constant of 170 nM in the presence of 10 mM KCl and with 100 nM in its absence. Binds 1 to 2 c-di-GMP per subunit. Only 1 c-di-GMP is seen in the wild-type crystal, while 2 are seen in the mutant. Depending on the concentration of K(+) stoichiometries of 1:1, 1.43:1 and 2:1 are determined by isothermal titration calorimetry. This chain is Cyclic di-GMP binding protein VCA0042, found in Vibrio cholerae serotype O1 (strain ATCC 39315 / El Tor Inaba N16961).